We begin with the raw amino-acid sequence, 654 residues long: Fructose-1,6-bisphosphatase class 3 (654 aa).

The interval 288–307 is disordered; the sequence is NPAFKPKKRPDKHERLTQRE. A compositionally biased stretch (basic and acidic residues) spans 298 to 307; it reads DKHERLTQRE.

The protein belongs to the FBPase class 3 family. Mn(2+) serves as cofactor.

The catalysed reaction is beta-D-fructose 1,6-bisphosphate + H2O = beta-D-fructose 6-phosphate + phosphate. Its pathway is carbohydrate biosynthesis; gluconeogenesis. The chain is Fructose-1,6-bisphosphatase class 3 from Staphylococcus aureus (strain Mu3 / ATCC 700698).